A 355-amino-acid polypeptide reads, in one-letter code: uncharacterized protein (355 aa).

Disordered stretches follow at residues methionine 1–arginine 121, arginine 226–methionine 253, and asparagine 336–threonine 355. Residues leucine 24–valine 37 are compositionally biased toward acidic residues. Over residues glutamate 65–glutamate 87 the composition is skewed to polar residues. Residues aspartate 91–serine 105 show a composition bias toward low complexity. The segment covering serine 106–glutamate 117 has biased composition (acidic residues). Residues arginine 226 to arginine 245 are compositionally biased toward basic and acidic residues.

This is an uncharacterized protein from Schizosaccharomyces pombe (strain 972 / ATCC 24843) (Fission yeast).